A 534-amino-acid chain; its full sequence is Probable bifunctional tRNA threonylcarbamoyladenosine biosynthesis protein (534 aa).

The kae1 stretch occupies residues 1-324 (MICLGIEGTA…YRTDQVEVTW (324 aa)). Fe cation contacts are provided by His-108, His-112, and Tyr-129. L-threonylcarbamoyladenylate contacts are provided by residues 129–133 (YTSGG), Asp-161, Gly-174, Glu-178, and Asn-258. Fe cation is bound at residue Asp-286. The 200-residue stretch at 335-534 (LPDNIKEKGA…DEIEKRGRYL (200 aa)) folds into the Protein kinase domain. ATP-binding positions include 340-348 (KEKGAEADI) and Lys-361. The active-site Proton acceptor; for kinase activity is Asp-455.

The protein in the N-terminal section; belongs to the KAE1 / TsaD family. In the C-terminal section; belongs to the protein kinase superfamily. Tyr protein kinase family. BUD32 subfamily. Component of the KEOPS complex that consists of Kae1, Bud32, Cgi121 and Pcc1; the whole complex dimerizes. It depends on Fe(2+) as a cofactor.

It localises to the cytoplasm. It catalyses the reaction L-seryl-[protein] + ATP = O-phospho-L-seryl-[protein] + ADP + H(+). The enzyme catalyses L-threonyl-[protein] + ATP = O-phospho-L-threonyl-[protein] + ADP + H(+). The catalysed reaction is L-threonylcarbamoyladenylate + adenosine(37) in tRNA = N(6)-L-threonylcarbamoyladenosine(37) in tRNA + AMP + H(+). Functionally, required for the formation of a threonylcarbamoyl group on adenosine at position 37 (t(6)A37) in tRNAs that read codons beginning with adenine. Is a component of the KEOPS complex that is probably involved in the transfer of the threonylcarbamoyl moiety of threonylcarbamoyl-AMP (TC-AMP) to the N6 group of A37. The Kae1 domain likely plays a direct catalytic role in this reaction. The Bud32 domain probably displays kinase activity that regulates Kae1 function. The chain is Probable bifunctional tRNA threonylcarbamoyladenosine biosynthesis protein from Methanosphaera stadtmanae (strain ATCC 43021 / DSM 3091 / JCM 11832 / MCB-3).